We begin with the raw amino-acid sequence, 101 residues long: NAD(P)H-quinone oxidoreductase subunit 4L, chloroplastic (101 aa).

The next 3 helical transmembrane spans lie at 2–22 (MFEHVLFLSAYLFSIGIYGLI), 32–52 (MCLELILNSVNINLVTFSDLF), and 61–81 (IFSIFVIAIAAAEAAIGLAIV).

Belongs to the complex I subunit 4L family. In terms of assembly, NDH is composed of at least 16 different subunits, 5 of which are encoded in the nucleus.

It localises to the plastid. It is found in the chloroplast thylakoid membrane. The enzyme catalyses a plastoquinone + NADH + (n+1) H(+)(in) = a plastoquinol + NAD(+) + n H(+)(out). The catalysed reaction is a plastoquinone + NADPH + (n+1) H(+)(in) = a plastoquinol + NADP(+) + n H(+)(out). NDH shuttles electrons from NAD(P)H:plastoquinone, via FMN and iron-sulfur (Fe-S) centers, to quinones in the photosynthetic chain and possibly in a chloroplast respiratory chain. The immediate electron acceptor for the enzyme in this species is believed to be plastoquinone. Couples the redox reaction to proton translocation, and thus conserves the redox energy in a proton gradient. This is NAD(P)H-quinone oxidoreductase subunit 4L, chloroplastic from Lemna minor (Common duckweed).